A 66-amino-acid chain; its full sequence is MSFSSLYKTFFKRNAVFVGTIFAGAFVFQTVFDTAITSWYENHNKGKLWKDVKARIAAGDGDDDDE.

At 2-17 (SFSSLYKTFFKRNAVF) the chain is on the mitochondrial matrix side. The helical transmembrane segment at 18–43 (VGTIFAGAFVFQTVFDTAITSWYENH) threads the bilayer. Over 44-66 (NKGKLWKDVKARIAAGDGDDDDE) the chain is Mitochondrial intermembrane.

This sequence belongs to the UQCR10/QCR9 family. In terms of assembly, component of the ubiquinol-cytochrome c oxidoreductase (cytochrome b-c1 complex, complex III, CIII), a multisubunit enzyme composed of 10 subunits. The complex is composed of 3 respiratory subunits cytochrome b (COB), cytochrome c1 (CYT1) and Rieske protein (RIP1), 2 core protein subunits COR1 and QCR2, and 5 low-molecular weight protein subunits QCR6, QCR7, QCR8, QCR9 and QCR10. The complex exists as an obligatory dimer and forms supercomplexes (SCs) in the inner mitochondrial membrane with a monomer or a dimer of cytochrome c oxidase (complex IV, CIV), resulting in 2 different assemblies (supercomplexes III(2)IV and III(2)IV(2)). Interacts with the transmembrane segment of RIP1.

Its subcellular location is the mitochondrion inner membrane. In terms of biological role, component of the ubiquinol-cytochrome c oxidoreductase, a multisubunit transmembrane complex that is part of the mitochondrial electron transport chain which drives oxidative phosphorylation. The respiratory chain contains 3 multisubunit complexes succinate dehydrogenase (complex II, CII), ubiquinol-cytochrome c oxidoreductase (cytochrome b-c1 complex, complex III, CIII) and cytochrome c oxidase (complex IV, CIV), that cooperate to transfer electrons derived from NADH and succinate to molecular oxygen, creating an electrochemical gradient over the inner membrane that drives transmembrane transport and the ATP synthase. The cytochrome b-c1 complex catalyzes electron transfer from ubiquinol to cytochrome c, linking this redox reaction to translocation of protons across the mitochondrial inner membrane, with protons being carried across the membrane as hydrogens on the quinol. In the process called Q cycle, 2 protons are consumed from the matrix, 4 protons are released into the intermembrane space and 2 electrons are passed to cytochrome c. The protein is Cytochrome b-c1 complex subunit 9, mitochondrial (QCR9) of Saccharomyces cerevisiae (strain ATCC 204508 / S288c) (Baker's yeast).